The following is a 239-amino-acid chain: Sugar fermentation stimulation protein homolog (239 aa).

This sequence belongs to the SfsA family.

The chain is Sugar fermentation stimulation protein homolog from Agrobacterium fabrum (strain C58 / ATCC 33970) (Agrobacterium tumefaciens (strain C58)).